Reading from the N-terminus, the 386-residue chain is Patatin group M-3 (386 aa).

An N-terminal signal peptide occupies residues 1-23 (MATTKSFLILFFMILATTSSTCA). The PNPLA domain occupies 32–229 (LSIDGGGIKG…TVGDPALLSL (198 aa)). A GXGXXG motif is present at residues 36-41 (GGGIKG). The GXSXG signature appears at 75 to 79 (GTSTG). S77 acts as the Nucleophile in catalysis. Residue N115 is glycosylated (N-linked (GlcNAc...) asparagine). Residue D215 is the Proton acceptor of the active site. Positions 215 to 217 (DGG) match the DGA/G motif. Residues 321 to 384 (ENALTGTTTE…DRKKLRANKA (64 aa)) are a coiled coil.

Belongs to the patatin family. Tuber.

It is found in the vacuole. Probable lipolytic acyl hydrolase (LAH), an activity which is thought to be involved in the response of tubers to pathogens. In Solanum tuberosum (Potato), this protein is Patatin group M-3.